Consider the following 32-residue polypeptide: Calcitonin-2 (32 aa).

Residues Cys1 and Cys7 are joined by a disulfide bond. Pro32 carries the proline amide modification.

Belongs to the calcitonin family.

It is found in the secreted. In terms of biological role, causes a rapid but short-lived drop in the level of calcium and phosphate in blood by promoting the incorporation of those ions in the bones. The sequence is that of Calcitonin-2 from Oncorhynchus gorbuscha (Pink salmon).